The sequence spans 265 residues: Glutamate racemase (265 aa).

Residues D7 to S8 and Y39 to G40 contribute to the substrate site. C70 (proton donor/acceptor) is an active-site residue. Position 71-72 (N71–T72) interacts with substrate. Residue C182 is the Proton donor/acceptor of the active site. T183–H184 is a binding site for substrate.

The protein belongs to the aspartate/glutamate racemases family.

The enzyme catalyses L-glutamate = D-glutamate. The protein operates within cell wall biogenesis; peptidoglycan biosynthesis. Its function is as follows. Provides the (R)-glutamate required for cell wall biosynthesis. The sequence is that of Glutamate racemase from Lachnospira eligens (strain ATCC 27750 / DSM 3376 / VPI C15-48 / C15-B4) (Eubacterium eligens).